A 329-amino-acid chain; its full sequence is tRNA uridine(34) hydroxylase (329 aa).

Residues 123–217 form the Rhodanese domain; it reads SDPETVLIDT…YLEEVPKEKS (95 aa). Cys-177 functions as the Cysteine persulfide intermediate in the catalytic mechanism. The tract at residues 310–329 is disordered; that stretch reads LNKQKKQQAKEAARKKTEKN. The segment covering 317 to 329 has biased composition (basic and acidic residues); the sequence is QAKEAARKKTEKN.

Belongs to the TrhO family.

The enzyme catalyses uridine(34) in tRNA + AH2 + O2 = 5-hydroxyuridine(34) in tRNA + A + H2O. Its function is as follows. Catalyzes oxygen-dependent 5-hydroxyuridine (ho5U) modification at position 34 in tRNAs. The sequence is that of tRNA uridine(34) hydroxylase from Francisella tularensis subsp. novicida (strain U112).